We begin with the raw amino-acid sequence, 179 residues long: Alkyl hydroperoxide reductase AhpD (179 aa).

The active-site Proton donor is C130. A disulfide bridge connects residues C130 and C133. C133 serves as the catalytic Cysteine sulfenic acid (-SOH) intermediate.

The protein belongs to the AhpD family. In terms of assembly, homotrimer.

The enzyme catalyses N(6)-[(R)-dihydrolipoyl]-L-lysyl-[lipoyl-carrier protein] + a hydroperoxide = N(6)-[(R)-lipoyl]-L-lysyl-[lipoyl-carrier protein] + an alcohol + H2O. Its function is as follows. Antioxidant protein with alkyl hydroperoxidase activity. Required for the reduction of the AhpC active site cysteine residues and for the regeneration of the AhpC enzyme activity. This chain is Alkyl hydroperoxide reductase AhpD, found in Nocardia farcinica (strain IFM 10152).